The chain runs to 3960 residues: Replicase polyprotein 1ab (3960 aa).

A C4-type; atypical zinc finger spans residues 8-28 (CTCTPNARVFMAEGQVYCTRC). Positions 69–180 (ECSPAGACWL…EDFCPFECAM (112 aa)) constitute a Peptidase C31 domain. The PCP1-alpha stretch occupies residues 69-182 (ECSPAGACWL…FCPFECAMAT (114 aa)). Catalysis depends on for Nsp1-alpha papain-like cysteine proteinase activity residues cysteine 76 and histidine 146. The tract at residues 199-200 (VS) is important for host EIF2AK2 inhibition. The interval 263-382 (DTVPEGNCWW…IFRFGSHKWY (120 aa)) is PCP1-beta. Residues 263 to 383 (DTVPEGNCWW…FRFGSHKWYG (121 aa)) form the Peptidase C32 domain. Catalysis depends on for Nsp1-beta papain-like cysteine proteinase activity residues cysteine 270 and histidine 339. Positions 426-513 (LKHYSPPAEG…GEHWTVTVTP (88 aa)) are OTU-like. Residues 428 to 535 (HYSPPAEGNC…QGCCGHKGGL (108 aa)) enclose the Peptidase C33 domain. Residues cysteine 437 and histidine 506 each act as for Nsp2 cysteine proteinase activity in the active site. 3 disordered regions span residues 809-882 (RWTP…ATPS), 899-979 (TPLS…GVLG), and 1156-1213 (PLAF…GGGP). Positions 810-819 (WTPPPPPPKV) are enriched in pro residues. A run of 8 helical transmembrane segments spans residues 1266–1286 (LCLF…LGVF), 1296–1316 (GVFG…SDPV), 1345–1365 (SLVV…LGGA), 1368–1388 (IWHF…GAYV), 1583–1603 (LMAA…GIYV), 1650–1670 (ALVA…FVSI), 1685–1705 (CVLL…LCVF), and 1719–1739 (ILWL…LAMV). Residues 1266-1388 (LCLFLCYSYP…ADCILAGAYV (123 aa)) are HD1. The HD2 stretch occupies residues 1583–1745 (LMAALHVACS…LAMVLLVSLW (163 aa)). A Peptidase S32 domain is found at 1810-2013 (GAFRTRKPSL…ALLAAKPELE (204 aa)). Active-site charge relay system; for 3C-like serine proteinase activity residues include histidine 1848, aspartate 1873, and serine 1927. 5 consecutive transmembrane segments (helical) span residues 2012–2032 (LEGG…WRMM), 2060–2080 (FSFG…VLMI), 2092–2112 (WSLA…LAAT), 2137–2157 (SPVP…LYLF), and 2164–2184 (HILV…FAEG). Positions 2036–2157 (WTPLVAVSFF…HLLAIILYLF (122 aa)) are HD3. Residues 2329-2358 (PTPTPPPAPVPIPLPPKVLENGPNAWGDED) are disordered. Residues 2330 to 2344 (TPTPPPAPVPIPLPP) show a composition bias toward pro residues. The NiRAN domain occupies 2488-2650 (IIDKLQGLTK…LPYKLYPVRG (163 aa)). Residues 2889–3023 (GRCLEADLAS…YAESPTMPNY (135 aa)) form the RdRp catalytic domain. Residues 3144 to 3207 (GKKSRVCGYC…SPVGKGTSPL (64 aa)) enclose the AV ZBD domain. Zn(2+)-binding residues include cysteine 3150, cysteine 3153, cysteine 3163, cysteine 3168, histidine 3171, histidine 3173, histidine 3175, histidine 3177, cysteine 3184, histidine 3186, cysteine 3193, and cysteine 3196. The region spanning 3264-3416 (ASTALLPTCK…VFDIMPQTQL (153 aa)) is the (+)RNA virus helicase ATP-binding domain. 3292–3299 (GPPGAGKT) serves as a coordination point for ATP. Residues 3417–3545 (KTIWRFGQNI…AVHCDGQLIV (129 aa)) form the (+)RNA virus helicase C-terminal domain. The 97-residue stretch at 3584 to 3680 (EGSSSPLPKV…LTKFVKGGAQ (97 aa)) folds into the AV-Nsp11N/CoV-Nsp15M domain. The NendoU domain occupies 3682-3804 (LPETVFSTGR…MVWKDKTAYF (123 aa)). Active-site residues include histidine 3713, histidine 3728, and lysine 3757.

This sequence belongs to the arteriviridae polyprotein family. As to quaternary structure, nsp1-alpha papain-like: Interacts with host RNF31. In terms of assembly, interacts with host EIF2AK2; this interaction occurs in host stress granules and leads to EIF2AK2 inhibition. Interacts with host G3BP1; this interaction probably plays a role in Nsp1-beta-mediated inhibition of host EIF2AK2. Interacts with host DDX18; this interaction redistributes host DDX18 to the cytoplasm. As to quaternary structure, interacts with host IFITM1. In terms of assembly, interacts with host DDX5. Interacts with host OTULIN. As to quaternary structure, interacts with host LGALS3. Specific enzymatic cleavages in vivo by its own proteases yield mature proteins. Nsp1 is autocleaved into two subunits, Nsp1-alpha and Nsp1-beta. There are two alternative pathways for processing. Either nsp4-5 is cleaved, which represents the major pathway or the nsp5-6 and nsp6-7 are processed, which represents the minor pathway. The major pathway occurs when nsp2 acts as a cofactor for nsp4.

Its subcellular location is the host nucleus. It is found in the host cytoplasm. The protein localises to the host membrane. It localises to the host endoplasmic reticulum. The protein resides in the host perinuclear region. The catalysed reaction is RNA(n) + a ribonucleoside 5'-triphosphate = RNA(n+1) + diphosphate. It catalyses the reaction ATP + H2O = ADP + phosphate + H(+). It carries out the reaction Thiol-dependent hydrolysis of ester, thioester, amide, peptide and isopeptide bonds formed by the C-terminal Gly of ubiquitin (a 76-residue protein attached to proteins as an intracellular targeting signal).. The enzyme catalyses uridylyl-uridylyl-ribonucleotide-RNA = a 3'-end uridylyl-2',3'-cyclophospho-uridine-RNA + a 5'-end dephospho-ribonucleoside-RNA. Its function is as follows. Contains the activities necessary for the transcription of negative stranded RNA, leader RNA, subgenomic mRNAs and progeny virion RNA as well as proteinases responsible for the cleavage of the polyprotein into functional products. Inhibits host IFN-beta production. Plays a role in the degradation of the host transcriptional activator CREBBP protein. The degradation of host CREBBP which is a key component of the IFN enhanceosome is likely responsible for the inhibition of interferon mediated by Nsp1-alpha. Also participates in the inhibition of host NF-kappa-B activation by counteracting LUBAC-dependent induction of NF-kappa-B. Reduces host NEMO ubiquitination by blocking the interaction between the two LUBAC complex components RNF31 and SHARPIN. Functionally, plays a role in blocking host mRNA nuclear export to the cytoplasm and subversion of host protein synthesis. Additionally, inhibits the interferon-activated JAK/STAT signal transduction by mediating the ubiquitination and subsequent proteasomal degradation of host KPNA1. Repurposes the host antiviral stress granules into a proviral platform to counteract the EIF2AK2/PKR restriction, thereby regulating the host inflammatory response. In terms of biological role, multifunctional protein that acts as a viral protease and as a viral antagonist of host immune response. Cleaves the nsp2/nsp3 site in the viral polyprotein. Displays deubiquitinating activity that cleaves both ubiquitinated and ISGylated products and therefore inhibits ubiquitin and ISG15-dependent host innate immunity. Also deubiquinates host NFKBIA, thereby interfering with NFKBIA degradation and impairing subsequent NF-kappa-B activation. Its function is as follows. Plays a role in the inhibition of the immune response by interacting with host IFITM1. This interaction leads to the proteasomal degradation of the IFN-induced antiviral protein IFITM1. Cleaves the majority of cleavage sites present in the C-terminus of the polyprotein. Triggers host apoptosis through caspase-3, -8, and -9 activations. Subverts host innate immune responses through its protease activity. Targets the NF-kappa-B essential modulator NEMO and mediates its cleavage. Blocks host interferon beta induction and downstream signaling by cleaving mitochondrial MAVS, dislodging it from the mitochondria. Impairs host defense by cleaving host mRNA-decapping enzyme DCP1A to attenuate its antiviral activity. Functionally, plays a role in the initial induction of autophagosomes from host endoplasmic reticulum. In terms of biological role, plays a role in the inhibition of host STAT3 signaling pathway by inducing the degradation of STAT3. Its function is as follows. Responsible for replication and transcription of the viral RNA genome. Displays RNA and DNA duplex-unwinding activities with 5' to 3' polarity. Functionally, plays a role in viral transcription/replication and prevents the simultaneous activation of host cell dsRNA sensors, such as MDA5/IFIH1, OAS, PKR and NLRP3 inflammasome. Acts by degrading the 5'-polyuridines generated during replication of the poly(A) region of viral genomic and subgenomic RNAs. Catalyzes a two-step reaction in which a 2'3'-cyclic phosphate (2'3'-cP) is first generated by 2'-O transesterification, which is then hydrolyzed to a 3'-phosphate (3'-P). If not degraded, poly(U) RNA would hybridize with poly(A) RNA tails and activate host dsRNA sensors. Also plays a role in the inhibition of host type I interferon production by recruiting host OTULIN to promote removal of linear ubiquitination targeting host NEMO. In Porcine reproductive and respiratory syndrome virus (strain VR-2332) (PRRSV), this protein is Replicase polyprotein 1ab (rep).